A 793-amino-acid chain; its full sequence is Cation channel sperm-associated auxiliary subunit delta (793 aa).

The first 20 residues, 1 to 20 (MLMLMLVAAVTMWLRPLVTA), serve as a signal peptide directing secretion. Residues 21-725 (QPLCRARTVR…AFPVQLVSAG (705 aa)) are Extracellular-facing. 7 disulfide bridges follow: Cys-24/Cys-370, Cys-60/Cys-146, Cys-145/Cys-153, Cys-388/Cys-497, Cys-511/Cys-703, Cys-526/Cys-573, and Cys-625/Cys-653. N-linked (GlcNAc...) asparagine glycosylation occurs at Asn-128. Asn-231, Asn-241, Asn-473, Asn-539, and Asn-631 each carry an N-linked (GlcNAc...) asparagine glycan. A helical transmembrane segment spans residues 726–747 (VVMVLLISSILGSVWLAYMIPR). Residues 748–793 (LLRTARGRRMTSFVAQLYGRCKTVCQFRASATARTGSKPMGRHRSS) are Cytoplasmic-facing.

It belongs to the CATSPERD family. As to quaternary structure, component of the CatSper complex or CatSpermasome composed of the core pore-forming members CATSPER1, CATSPER2, CATSPER3 and CATSPER4 as well as auxiliary members CATSPERB, CATSPERG, CATSPERD, CATSPERE, CATSPERZ, C2CD6/CATSPERT, TMEM249, TMEM262 and EFCAB9. HSPA1 may be an additional auxiliary complex member. The core complex members CATSPER1, CATSPER2, CATSPER3 and CATSPER4 form a heterotetrameric channel. The auxiliary CATSPERB, CATSPERG, CATSPERD and CATSPERE subunits form a pavilion-like structure over the pore which stabilizes the complex through interactions with CATSPER4, CATSPER3, CATSPER1 and CATSPER2 respectively. TMEM262/CATSPERH interacts with CATSPERB, further stabilizing the complex. C2CD6/CATSPERT interacts at least with CATSPERD and is required for targeting the CatSper complex in the flagellar membrane.

The protein resides in the cell projection. The protein localises to the cilium. Its subcellular location is the flagellum membrane. Auxiliary component of the CatSper complex, a complex involved in sperm cell hyperactivation. Sperm cell hyperactivation is needed for sperm motility which is essential late in the preparation of sperm for fertilization. Required for CATSPER1 stability before intraflagellar transport and/or incorporation of the CatSper complex channel into the flagellar membrane. This chain is Cation channel sperm-associated auxiliary subunit delta, found in Macaca fascicularis (Crab-eating macaque).